The following is a 158-amino-acid chain: 2-C-methyl-D-erythritol 2,4-cyclodiphosphate synthase (158 aa).

A divalent metal cation contacts are provided by Asp9 and His11. Residues 9 to 11 (DVH) and 35 to 36 (HS) each bind 4-CDP-2-C-methyl-D-erythritol 2-phosphate. Residue His43 participates in a divalent metal cation binding. 4-CDP-2-C-methyl-D-erythritol 2-phosphate contacts are provided by residues 57–59 (DIG), 62–66 (FPDTD), 133–136 (TTTE), Phe140, and Arg143.

The protein belongs to the IspF family. Homotrimer. It depends on a divalent metal cation as a cofactor.

The catalysed reaction is 4-CDP-2-C-methyl-D-erythritol 2-phosphate = 2-C-methyl-D-erythritol 2,4-cyclic diphosphate + CMP. Its pathway is isoprenoid biosynthesis; isopentenyl diphosphate biosynthesis via DXP pathway; isopentenyl diphosphate from 1-deoxy-D-xylulose 5-phosphate: step 4/6. Its function is as follows. Involved in the biosynthesis of isopentenyl diphosphate (IPP) and dimethylallyl diphosphate (DMAPP), two major building blocks of isoprenoid compounds. Catalyzes the conversion of 4-diphosphocytidyl-2-C-methyl-D-erythritol 2-phosphate (CDP-ME2P) to 2-C-methyl-D-erythritol 2,4-cyclodiphosphate (ME-CPP) with a corresponding release of cytidine 5-monophosphate (CMP). This Actinobacillus succinogenes (strain ATCC 55618 / DSM 22257 / CCUG 43843 / 130Z) protein is 2-C-methyl-D-erythritol 2,4-cyclodiphosphate synthase.